The following is a 1412-amino-acid chain: DNA-directed RNA polymerase subunit beta (1412 aa).

This sequence belongs to the RNA polymerase beta chain family. As to quaternary structure, the RNAP catalytic core consists of 2 alpha, 1 beta, 1 beta' and 1 omega subunit. When a sigma factor is associated with the core the holoenzyme is formed, which can initiate transcription.

It catalyses the reaction RNA(n) + a ribonucleoside 5'-triphosphate = RNA(n+1) + diphosphate. Its function is as follows. DNA-dependent RNA polymerase catalyzes the transcription of DNA into RNA using the four ribonucleoside triphosphates as substrates. The sequence is that of DNA-directed RNA polymerase subunit beta from Bdellovibrio bacteriovorus (strain ATCC 15356 / DSM 50701 / NCIMB 9529 / HD100).